The primary structure comprises 320 residues: Aspartate carbamoyltransferase catalytic subunit (320 aa).

Arginine 57 and threonine 58 together coordinate carbamoyl phosphate. Residue lysine 85 coordinates L-aspartate. Residues arginine 107, histidine 141, and glutamine 144 each coordinate carbamoyl phosphate. L-aspartate is bound by residues arginine 174 and arginine 228. Positions 269 and 270 each coordinate carbamoyl phosphate.

Belongs to the aspartate/ornithine carbamoyltransferase superfamily. ATCase family. As to quaternary structure, heterododecamer (2C3:3R2) of six catalytic PyrB chains organized as two trimers (C3), and six regulatory PyrI chains organized as three dimers (R2).

The enzyme catalyses carbamoyl phosphate + L-aspartate = N-carbamoyl-L-aspartate + phosphate + H(+). It functions in the pathway pyrimidine metabolism; UMP biosynthesis via de novo pathway; (S)-dihydroorotate from bicarbonate: step 2/3. Catalyzes the condensation of carbamoyl phosphate and aspartate to form carbamoyl aspartate and inorganic phosphate, the committed step in the de novo pyrimidine nucleotide biosynthesis pathway. The chain is Aspartate carbamoyltransferase catalytic subunit from Mycobacterium marinum (strain ATCC BAA-535 / M).